The sequence spans 83 residues: Major outer membrane lipoprotein (83 aa).

A signal peptide spans 1 to 19 (MNNVLKFSALALAAVLATG). Cysteine 20 carries the N-palmitoyl cysteine lipid modification. Residue cysteine 20 is the site of S-diacylglycerol cysteine attachment.

Its subcellular location is the cell outer membrane. The sequence is that of Major outer membrane lipoprotein (oprI) from Pseudomonas aeruginosa (strain ATCC 15692 / DSM 22644 / CIP 104116 / JCM 14847 / LMG 12228 / 1C / PRS 101 / PAO1).